Consider the following 329-residue polypeptide: NADH-quinone oxidoreductase subunit H 1 (329 aa).

The next 8 helical transmembrane spans lie at 12–32, 78–98, 120–140, 159–179, 191–211, 242–262, 270–290, and 308–328; these read LAKI…LVFA, WLFY…FAVI, VGLL…ALGG, LISY…LAGS, GIWF…SIAA, LFFV…TTFF, WLPP…FFIW, and WKVL…ILML.

This sequence belongs to the complex I subunit 1 family. NDH-1 is composed of 14 different subunits. Subunits NuoA, H, J, K, L, M, N constitute the membrane sector of the complex.

The protein localises to the cell inner membrane. The catalysed reaction is a quinone + NADH + 5 H(+)(in) = a quinol + NAD(+) + 4 H(+)(out). Functionally, NDH-1 shuttles electrons from NADH, via FMN and iron-sulfur (Fe-S) centers, to quinones in the respiratory chain. The immediate electron acceptor for the enzyme in this species is believed to be ubiquinone. Couples the redox reaction to proton translocation (for every two electrons transferred, four hydrogen ions are translocated across the cytoplasmic membrane), and thus conserves the redox energy in a proton gradient. This subunit may bind ubiquinone. This Geobacter metallireducens (strain ATCC 53774 / DSM 7210 / GS-15) protein is NADH-quinone oxidoreductase subunit H 1.